Here is a 617-residue protein sequence, read N- to C-terminus: Procollagen galactosyltransferase 1 (617 aa).

The signal sequence occupies residues 1–31; the sequence is MAALPRGSRGLPLLPLLLLLPPLGGPRGADG. Asparagine 91, asparagine 179, and asparagine 376 each carry an N-linked (GlcNAc...) asparagine glycan. The span at 582-601 shows a compositional bias: basic and acidic residues; sequence DRAKSQKMREQQALSREAKN. The disordered stretch occupies residues 582 to 617; the sequence is DRAKSQKMREQQALSREAKNSDVLQSPLDSTARDEL. The Prevents secretion from ER signature appears at 614–617; the sequence is RDEL.

Belongs to the glycosyltransferase 25 family. Post-translationally, N-glycosylated.

It is found in the endoplasmic reticulum lumen. It catalyses the reaction (5R)-5-hydroxy-L-lysyl-[collagen] + UDP-alpha-D-galactose = (5R)-5-O-(beta-D-galactosyl)-5-hydroxy-L-lysyl-[collagen] + UDP + H(+). Beta-galactosyltransferase that transfers beta-galactose to hydroxylysine residues of type I collagen. By acting on collagen glycosylation, facilitates the formation of collagen triple helix. Also involved in the biosynthesis of collagen type IV. The sequence is that of Procollagen galactosyltransferase 1 (Colgalt1) from Mus musculus (Mouse).